A 419-amino-acid polypeptide reads, in one-letter code: Transcriptional regulator Myc-A (419 aa).

The short motif at 78-86 is the 9aaTAD element; it reads EMVTEFLGG. Disordered stretches follow at residues 141–166, 206–274, and 319–344; these read ALSS…HGSL, SPCQ…HYSP, and NNRK…NVLE. The span at 226–245 shows a compositional bias: acidic residues; the sequence is ESEEEPEDEDEDCDEEEEID. Over residues 248-261 the composition is skewed to basic and acidic residues; sequence TVEKRQSASKRVES. Polar residues predominate over residues 319-328; sequence NNRKCASPRS. The bHLH domain occupies 335–387; that stretch reads DKRKTHNVLERQRRNELKLSFFALRDQVPEVASNEKAPKVVILKKATEYAISL. The interval 387–415 is leucine-zipper; that stretch reads LQEDERRLIRETEQLKYRKEQLKQRLQQL.

As to quaternary structure, efficient DNA binding requires dimerization with another bHLH protein. Binds DNA as a heterodimer with MAX.

Its subcellular location is the nucleus. Transcription factor that binds DNA in a non-specific manner, yet also specifically recognizes the core sequence 5'-CAC[GA]TG-3'. Activates the transcription of growth-related genes. The polypeptide is Transcriptional regulator Myc-A (myc-a) (Xenopus laevis (African clawed frog)).